The chain runs to 319 residues: Taste receptor type 2 member 30 (319 aa).

Residue Met-1 is a topological domain, extracellular. Residues 2–22 form a helical membrane-spanning segment; sequence ITFLPIIFSILIVVIFVIGNF. The Cytoplasmic portion of the chain corresponds to 23–46; the sequence is ANGFIALVNSIEWVKRQKISFVDQ. A helical membrane pass occupies residues 47 to 67; the sequence is ILTALAVSRVGLLWVLLLHWY. At 68–86 the chain is on the extracellular side; that stretch reads ATQLNPAFYSVEVRITAYN. A helical membrane pass occupies residues 87–107; sequence VWAVTNHFSSWLATSLSMFYL. Residues 108–126 are Cytoplasmic-facing; sequence LRIANFSNLIFLRIKRRVK. A helical membrane pass occupies residues 127 to 147; sequence SVVLVILLGPLLFLVCHLFVI. Residues 148-178 lie on the Extracellular side of the membrane; sequence NMDETVWTKEYEGNVTWKIKLRSAMYHSNMT. N-linked (GlcNAc...) asparagine glycans are attached at residues Asn-161 and Asn-176. Residues 179–199 form a helical membrane-spanning segment; it reads LTMLANFVPLTLTLISFLLLI. Topologically, residues 200 to 229 are cytoplasmic; that stretch reads CSLCKHLKKMQLHGKGSQDPSTKVHIKALQ. A helical transmembrane segment spans residues 230-250; sequence TVTSFLLLCAIYFLSMIISVC. Residues 251 to 259 are Extracellular-facing; it reads NFGRLEKQP. The chain crosses the membrane as a helical span at residues 260 to 280; sequence VFMFCQAIIFSYPSTHPFILI. Over 281–319 the chain is Cytoplasmic; the sequence is LGNKKLKQIFLSVLRHVRYWVKDRSLRLHRFTRGALCVF.

It belongs to the G-protein coupled receptor T2R family. In terms of tissue distribution, expressed in subsets of taste receptor cells of the tongue and exclusively in gustducin-positive cells.

It localises to the membrane. Functionally, receptor that may play a role in the perception of bitterness and is gustducin-linked. May play a role in sensing the chemical composition of the gastrointestinal content. The activity of this receptor may stimulate alpha gustducin, mediate PLC-beta-2 activation and lead to the gating of TRPM5. In Homo sapiens (Human), this protein is Taste receptor type 2 member 30 (TAS2R30).